The sequence spans 463 residues: V-type ATP synthase beta chain (463 aa).

Belongs to the ATPase alpha/beta chains family.

Functionally, produces ATP from ADP in the presence of a proton gradient across the membrane. The V-type beta chain is a regulatory subunit. The polypeptide is V-type ATP synthase beta chain (Halothermothrix orenii (strain H 168 / OCM 544 / DSM 9562)).